We begin with the raw amino-acid sequence, 298 residues long: Tyrosine recombinase XerD (298 aa).

The region spanning Lys2–Tyr87 is the Core-binding (CB) domain. The Tyr recombinase domain occupies Arg108 to Gln292. Active-site residues include Arg148, Lys172, His244, Arg247, and His270. The active-site O-(3'-phospho-DNA)-tyrosine intermediate is Tyr279.

The protein belongs to the 'phage' integrase family. XerD subfamily. In terms of assembly, forms a cyclic heterotetrameric complex composed of two molecules of XerC and two molecules of XerD, in which XerC interacts with XerD via its C-terminal region, XerD interacts with XerC via its C-terminal region and so on.

Its subcellular location is the cytoplasm. Its activity is regulated as follows. FtsK may regulate the catalytic switch between XerC and XerD in the heterotetrameric complex during the two steps of the recombination process. Site-specific tyrosine recombinase, which acts by catalyzing the cutting and rejoining of the recombining DNA molecules. Binds cooperatively to specific DNA consensus sequences that are separated from XerC binding sites by a short central region, forming the heterotetrameric XerC-XerD complex that recombines DNA substrates. The complex is essential to convert dimers of the bacterial chromosome into monomers to permit their segregation at cell division. It also contributes to the segregational stability of plasmids. In the complex XerD specifically exchanges the bottom DNA strands. The protein is Tyrosine recombinase XerD (xerD) of Escherichia coli O6:H1 (strain CFT073 / ATCC 700928 / UPEC).